The following is a 457-amino-acid chain: Putative transposase y4bF (457 aa).

The Integrase catalytic domain occupies 128 to 313 (TFHQPRLRRE…RPLNLAPDRL (186 aa)). The tract at residues 406-440 (QDERPAPKVRTNSEKNGYTPRGRKPGKRTDFMNDP) is disordered.

In Sinorhizobium fredii (strain NBRC 101917 / NGR234), this protein is Putative transposase y4bF.